A 584-amino-acid chain; its full sequence is Phosphoinositide phospholipase C 7 (584 aa).

Positions 26–102 (EIKTLFDNYS…NSPLSSLEVH (77 aa)) constitute an EF-hand-like domain. Residues 103 to 248 (QDMDAPLSHY…LKKRIMISTK (146 aa)) form the PI-PLC X-box domain. Catalysis depends on residues H118 and H164. The interval 285–318 (DRSVDKNDSNGDDDDDDDDDDDDDDGDDKIKKNA) is disordered. S287 carries the post-translational modification Phosphoserine. Residues 294–311 (NGDDDDDDDDDDDDDDGD) are compositionally biased toward acidic residues. Residues 323 to 439 (KHLIAIEAGK…GYIKKPDLLL (117 aa)) enclose the PI-PLC Y-box domain. One can recognise a C2 domain in the interval 433–566 (KKPDLLLKSN…QGIRAVPLRN (134 aa)).

The cofactor is Ca(2+). In terms of tissue distribution, expressed in leaves, roots, flowers and siliques.

The protein resides in the cell membrane. It catalyses the reaction a 1,2-diacyl-sn-glycero-3-phospho-(1D-myo-inositol-4,5-bisphosphate) + H2O = 1D-myo-inositol 1,4,5-trisphosphate + a 1,2-diacyl-sn-glycerol + H(+). The production of the second messenger molecules diacylglycerol (DAG) and inositol 1,4,5-trisphosphate (IP3) is mediated by activated phosphatidylinositol-specific phospholipase C enzymes. The chain is Phosphoinositide phospholipase C 7 (PLC7) from Arabidopsis thaliana (Mouse-ear cress).